Reading from the N-terminus, the 110-residue chain is Small ribosomal subunit protein uS10 (110 aa).

It belongs to the universal ribosomal protein uS10 family. In terms of assembly, part of the 30S ribosomal subunit.

Involved in the binding of tRNA to the ribosomes. The sequence is that of Small ribosomal subunit protein uS10 from Ehrlichia ruminantium (strain Gardel).